Here is a 228-residue protein sequence, read N- to C-terminus: Endonuclease V (228 aa).

Mg(2+) is bound by residues Asp36 and Asp104.

Belongs to the endonuclease V family. Mg(2+) serves as cofactor.

It is found in the cytoplasm. It catalyses the reaction Endonucleolytic cleavage at apurinic or apyrimidinic sites to products with a 5'-phosphate.. DNA repair enzyme involved in the repair of deaminated bases. Selectively cleaves double-stranded DNA at the second phosphodiester bond 3' to a deoxyinosine leaving behind the intact lesion on the nicked DNA. This Serratia proteamaculans (strain 568) protein is Endonuclease V.